Consider the following 134-residue polypeptide: Profilin-4 (134 aa).

Cysteines 13 and 118 form a disulfide. The Involved in PIP2 interaction motif lies at 84–100 (AVIRGKKGSGGITIKKT). Residue Thr114 is modified to Phosphothreonine.

Belongs to the profilin family. As to quaternary structure, occurs in many kinds of cells as a complex with monomeric actin in a 1:1 ratio. In terms of processing, phosphorylated by MAP kinases.

The protein resides in the cytoplasm. It is found in the cytoskeleton. In terms of biological role, binds to actin and affects the structure of the cytoskeleton. At high concentrations, profilin prevents the polymerization of actin, whereas it enhances it at low concentrations. The chain is Profilin-4 from Olea europaea (Common olive).